We begin with the raw amino-acid sequence, 68 residues long: Beta-defensin 1 (68 aa).

The N-terminal stretch at 1-21 is a signal peptide; that stretch reads MRTSYLLLFILCLVLCDMDSG. Positions 22-32 are excised as a propeptide; sequence DTFLTGLGHRS. 3 disulfides stabilise this stretch: Cys37/Cys66, Cys44/Cys59, and Cys49/Cys67.

This sequence belongs to the beta-defensin family. As to quaternary structure, monomer. Homodimer.

The protein localises to the secreted. It is found in the membrane. In terms of biological role, has bactericidal activity. May act as a ligand for C-C chemokine receptor CCR6. Positively regulates the sperm motility and bactericidal activity in a CCR6-dependent manner. Binds to CCR6 and triggers Ca2+ mobilization in the sperm which is important for its motility. The sequence is that of Beta-defensin 1 (DEFB1) from Saguinus oedipus (Cotton-top tamarin).